The sequence spans 86 residues: Centromere protein W (86 aa).

This sequence belongs to the CENP-W/WIP1 family. In terms of assembly, heterodimer with CENPT; this dimer coassembles with CENPS-CENPX heterodimers at centromeres to form the tetrameric CENP-T-W-S-X complex, which is a subcomplex of the large constitutive centromere-associated network (CCAN, also known as the interphase centromere complex or ICEN). Interacts with NPM1.

It is found in the nucleus. Its subcellular location is the chromosome. The protein resides in the centromere. The protein localises to the kinetochore. It localises to the nucleus matrix. It is found in the nucleolus. In terms of biological role, component of the CENPA-NAC (nucleosome-associated) complex, a complex that plays a central role in assembly of kinetochore proteins, mitotic progression and chromosome segregation. The CENPA-NAC complex recruits the CENPA-CAD (nucleosome distal) complex and may be involved in incorporation of newly synthesized CENPA into centromeres. Part of a nucleosome-associated complex that binds specifically to histone H3-containing nucleosomes at the centromere, as opposed to nucleosomes containing CENPA. Component of the heterotetrameric CENP-T-W-S-X complex that binds and supercoils DNA, and plays an important role in kinetochore assembly. CENPW has a fundamental role in kinetochore assembly and function. It is one of the inner kinetochore proteins, with most further proteins binding downstream. Required for normal chromosome organization and normal progress through mitosis. The polypeptide is Centromere protein W (Cenpw) (Rattus norvegicus (Rat)).